The primary structure comprises 1236 residues: DNA topoisomerase 2 (1236 aa).

Residues Asn65, Asn96, 124-126 (SSN), 137-144 (GRHGYGAK), and 354-356 (QSK) each bind ATP. The region spanning 434–548 (RTLIITEGDS…KLLQNNPGYI (115 aa)) is the Toprim domain. Glu440, Asp517, and Asp519 together coordinate Mg(2+). In terms of domain architecture, Topo IIA-type catalytic spans 685-1101 (IPHCVDGLKP…TPVKMWLTEL (417 aa)). Tyr775 (O-(5'-phospho-DNA)-tyrosine intermediate) is an active-site residue. Residues 956-965 (ALAQRIYING) are interaction with DNA. Residues 1161–1211 (YEKPPPSKRRPGESVGGARPSDSAARTVGKRLVGSRSEFKNKKPMSRKNNV) form a disordered region.

This sequence belongs to the type II topoisomerase family. Homodimer. Requires Mg(2+) as cofactor. Mn(2+) is required as a cofactor. Ca(2+) serves as cofactor.

It is found in the nucleus. It catalyses the reaction ATP-dependent breakage, passage and rejoining of double-stranded DNA.. Its function is as follows. Control of topological states of DNA by transient breakage and subsequent rejoining of DNA strands. Topoisomerase II makes double-strand breaks. This is DNA topoisomerase 2 (TOP2) from Leishmania chagasi.